The following is a 291-amino-acid chain: Putative ribosomal protein uL16-like, mitochondrial (291 aa).

The N-terminal 27 residues, 1 to 27 (MQRFMFSRVVEHQRQISRGFLSLVPSL), are a transit peptide targeting the mitochondrion. Positions 127-137 (VHETSNNEKKQ) are enriched in basic and acidic residues. The disordered stretch occupies residues 127-173 (VHETSNNEKKQQKQKSSVNEKKPKKKKKSSISDIPRRTKFQKHHRGR). Positions 163–173 (RTKFQKHHRGR) are enriched in basic residues.

Belongs to the universal ribosomal protein uL16 family.

It localises to the mitochondrion. Functionally, could be a component of the large subunit of mitochondrial ribosome. In Arabidopsis thaliana (Mouse-ear cress), this protein is Putative ribosomal protein uL16-like, mitochondrial.